The primary structure comprises 333 residues: MSKIGINGFGRIGRLVLRAALDKGAEVVAVNDPFIDVNYMVYLFKYDSTHGRFKGTVAADGGFLVVNGKKITVFCERDPTNINWASAGAEYIVESTGVFTTIDKASAHFKGGAKKVVISAPSADAPMFVCGVNLEAYSPDMKVVSNASCTTNCLAPLAKVIHDNFEIVEGLMTTVHATTATQKTVDGPSGKLWRDGRGAAQNIIPASTGAAKAVGKVIPELNGKLTGMAFRVPTPNVSVVDLTVRLGKSATYDEIKAKVLEASQGPMKGILDYTEEEVVSTDFVGDTHSSVFDAKAGIPLNDKFVKLISWYDNEFGYSNRVIDLIKYMQSKDA.

Residues 11 to 12, Asp32, and Arg77 contribute to the NAD(+) site; that span reads RI. D-glyceraldehyde 3-phosphate is bound by residues 148-150, Thr179, 208-209, and Arg231; these read SCT and TG. Cys149 acts as the Nucleophile in catalysis. Asn313 provides a ligand contact to NAD(+).

It belongs to the glyceraldehyde-3-phosphate dehydrogenase family. Homotetramer.

The protein localises to the cytoplasm. The enzyme catalyses D-glyceraldehyde 3-phosphate + phosphate + NAD(+) = (2R)-3-phospho-glyceroyl phosphate + NADH + H(+). It participates in carbohydrate degradation; glycolysis; pyruvate from D-glyceraldehyde 3-phosphate: step 1/5. In Glossina morsitans morsitans (Savannah tsetse fly), this protein is Glyceraldehyde-3-phosphate dehydrogenase (Gapdh).